The following is a 294-amino-acid chain: Ribosomal RNA small subunit methyltransferase A (294 aa).

Asn31, Leu33, Gly58, Glu79, Asp111, and Asn136 together coordinate S-adenosyl-L-methionine.

Belongs to the class I-like SAM-binding methyltransferase superfamily. rRNA adenine N(6)-methyltransferase family. RsmA subfamily.

It is found in the cytoplasm. The catalysed reaction is adenosine(1518)/adenosine(1519) in 16S rRNA + 4 S-adenosyl-L-methionine = N(6)-dimethyladenosine(1518)/N(6)-dimethyladenosine(1519) in 16S rRNA + 4 S-adenosyl-L-homocysteine + 4 H(+). Specifically dimethylates two adjacent adenosines (A1518 and A1519) in the loop of a conserved hairpin near the 3'-end of 16S rRNA in the 30S particle. May play a critical role in biogenesis of 30S subunits. In Lactobacillus acidophilus (strain ATCC 700396 / NCK56 / N2 / NCFM), this protein is Ribosomal RNA small subunit methyltransferase A.